The following is a 520-amino-acid chain: Cytochrome P450 monooxygenase oblB (520 aa).

3 helical membrane-spanning segments follow: residues 17-37 (VAVI…RLFL), 229-249 (LFMG…SILA), and 320-340 (IGTG…HIVV). Residue Cys462 coordinates heme.

Belongs to the cytochrome P450 family. Requires heme as cofactor.

The protein localises to the membrane. The protein operates within secondary metabolite biosynthesis; terpenoid biosynthesis. Cytochrome P450 monooxygenase; part of the gene cluster that mediates the biosynthesis of the sesterterpenes ophiobolins, fungal phytotoxins with potential anti-cancer activities. The first step of the pathway is performed by the sesterterpene synthase oblA that possesses both prenyl transferase and terpene cyclase activity, converting isopentenyl diphosphate and dimethylallyl diphosphate into geranylfarnesyl diphosphate (GFPP) and further converting GFPP into ophiobolin F, respectively. Other sesterterpenoids (C(25) terpenoids) are found as minor products of oblA. It is expected that ophiobolin F is then oxidized to ophiobolin A via ophiobolin C and ophiobolin B intermediates by the combined action of the cytochrome P450 monooxygenase oblB and the FAD-dependent oxidoreductase oblC. Although oblB catalyzes multistep oxygenations at C5 and C21/C7 in a relatively efficient manner, it is unable to convert ophiobolin F to ophiobolin C and produces instead several unexpected derivatives. The chain is Cytochrome P450 monooxygenase oblB from Aspergillus clavatus (strain ATCC 1007 / CBS 513.65 / DSM 816 / NCTC 3887 / NRRL 1 / QM 1276 / 107).